Reading from the N-terminus, the 291-residue chain is Pyridoxal 5'-phosphate synthase subunit PdxS (291 aa).

Residue aspartate 23 participates in D-ribose 5-phosphate binding. Lysine 80 serves as the catalytic Schiff-base intermediate with D-ribose 5-phosphate. Glycine 152 is a D-ribose 5-phosphate binding site. Arginine 164 contributes to the D-glyceraldehyde 3-phosphate binding site. D-ribose 5-phosphate contacts are provided by residues glycine 213 and 234–235; that span reads GS.

Belongs to the PdxS/SNZ family. In terms of assembly, in the presence of PdxT, forms a dodecamer of heterodimers.

It carries out the reaction aldehydo-D-ribose 5-phosphate + D-glyceraldehyde 3-phosphate + L-glutamine = pyridoxal 5'-phosphate + L-glutamate + phosphate + 3 H2O + H(+). Its pathway is cofactor biosynthesis; pyridoxal 5'-phosphate biosynthesis. Catalyzes the formation of pyridoxal 5'-phosphate from ribose 5-phosphate (RBP), glyceraldehyde 3-phosphate (G3P) and ammonia. The ammonia is provided by the PdxT subunit. Can also use ribulose 5-phosphate and dihydroxyacetone phosphate as substrates, resulting from enzyme-catalyzed isomerization of RBP and G3P, respectively. This is Pyridoxal 5'-phosphate synthase subunit PdxS from Streptococcus pneumoniae (strain P1031).